A 503-amino-acid polypeptide reads, in one-letter code: Interferon regulatory factor 7 (503 aa).

The segment at residues 11–126 is a DNA-binding region (IRF tryptophan pentad repeat); sequence RVLFGEWLLG…DPHKVYALSR (116 aa). Residues 69–88 form a disordered region; it reads RWPPSSRGGGPPPEAETAER. K92 is subject to N6-acetyllysine; by KAT2A and KAT2B. 2 disordered regions span residues 133–156 and 242–277; these read GPGT…GPPG and TTPS…SPSA. A compositionally biased stretch (pro residues) spans 146–156; the sequence is AVPPPQGGPPG. Residues 284-456 are necessary for the interaction with NMI; that stretch reads PSPGALDVTI…SLVLVKLEPW (173 aa). Residue K375 forms a Glycyl lysine isopeptide (Lys-Gly) (interchain with G-Cter in ubiquitin) linkage. Glycyl lysine isopeptide (Lys-Gly) (interchain with G-Cter in SUMO) cross-links involve residues K444 and K446. Phosphoserine is present on residues S471, S472, and S475. Phosphoserine; by TBK1 and IKKE occurs at positions 477 and 479. 3 positions are modified to phosphoserine: S483, S484, and S487.

It belongs to the IRF family. Monomer. Homodimer; phosphorylation-induced. Heterodimer with IRF3. Interacts with TICAM1 and TICAM2. Interacts with MYD88 and TRAF6. Interacts with TRIM35. Interacts with NMI; the interaction is direct and leads to the inhibition of IRF7-mediated type I IFN production. Interacts with GBP4; preventing interaction between TRAF6 and IRF7, resulting in impaired TRAF6-mediated IRF7 ubiquitination. As to quaternary structure, (Microbial infection) Interacts with Epstein-Barr virus LF2 and LMP1. In terms of assembly, (Microbial infection) Interacts with rotavirus A NSP1; this interaction leads to the proteasome-dependent degradation of IRF7. (Microbial infection) Interacts with human herpes virus 8/HHV-8 proteins ORF45 and vIRF-1. As to quaternary structure, (Microbial infection) Interacts with human T-cell leukemia virus 1/HTLV-1 protein HBZ. In terms of assembly, (Microbial infection) Interacts with Seneca Valley virus protease 3C; this interaction is involved in the suppression of IRF7 expression and phosphorylation by the virus. (Microbial infection) Interacts with ebolavirus VP35; this interaction mediates the sumoylation of IRF7 and contributes to the viral inhibition of IFN-type I production. As to quaternary structure, (Microbial infection) Interacts with severe fever with thrombocytopenia syndrome virus (SFTSV) NSs; this interaction sequesters IRF7 in NSs-induced cytoplasmic inclusion bodies. In terms of assembly, (Microbial infection) Interacts with herpes virus 8/HHV-8 protein vIRF-4; this interaction prevents IRF7 dimerization and subsequent activation. (Microbial infection) Interacts with human metapneumovirus protein M2-2; this interaction prevents IRF7 phosphorlyation and subsequent TLR7/9-dependent IFN-alpha induction. Post-translationally, acetylation inhibits its DNA-binding ability and activity. In response to a viral infection, phosphorylated on Ser-477 and Ser-479 by TBK1 and IKBKE1. Phosphorylation, and subsequent activation is inhibited by vaccinia virus protein E3. In TLR7- and TLR9-mediated signaling pathway, phosphorylated by IRAK1. In terms of processing, TRAF6-mediated ubiquitination is required for IRF7 activation. TRIM35 mediates IRF7 'Lys-48'-linked polyubiquitination and subsequent proteasomal degradation. Ubiquitinated by UBE3C, leading to its degradation. Post-translationally, sumoylated by TRIM28, which inhibits its transactivation activity. (Microbial infection) Cleaved and inactivated by the protease 3C of enterovirus 71 allowing the virus to disrupt the host type I interferon production. In terms of processing, (Microbial infection) Cleaved and inactivated by the protease 3C of human enterovirus 68D (EV68) allowing the virus to disrupt the host type I interferon production. Post-translationally, 'Lys-48'-linked polyubiquitination and subsequent proteasomal degradation is NMI-dependent in response to Sendai virus infection. 'Lys-63'-linked ubiquitination by NEURL3 promotes IRF7 activation. Expressed predominantly in spleen, thymus and peripheral blood leukocytes.

The protein resides in the nucleus. The protein localises to the cytoplasm. With respect to regulation, in the absence of viral infection, maintained as a monomer in an autoinhibited state and phosphorylation disrupts this autoinhibition leading to the liberation of the DNA-binding and dimerization activities and its nuclear localization where it can activate type I IFN and ISG genes. In terms of biological role, key transcriptional regulator of type I interferon (IFN)-dependent immune responses and plays a critical role in the innate immune response against DNA and RNA viruses. Regulates the transcription of type I IFN genes (IFN-alpha and IFN-beta) and IFN-stimulated genes (ISG) by binding to an interferon-stimulated response element (ISRE) in their promoters. Can efficiently activate both the IFN-beta (IFNB) and the IFN-alpha (IFNA) genes and mediate their induction via both the virus-activated, MyD88-independent pathway and the TLR-activated, MyD88-dependent pathway. Induces transcription of ubiquitin hydrolase USP25 mRNA in response to lipopolysaccharide (LPS) or viral infection in a type I IFN-dependent manner. Required during both the early and late phases of the IFN gene induction but is more critical for the late than for the early phase. Exists in an inactive form in the cytoplasm of uninfected cells and following viral infection, double-stranded RNA (dsRNA), or toll-like receptor (TLR) signaling, becomes phosphorylated by IKBKE and TBK1 kinases. This induces a conformational change, leading to its dimerization and nuclear localization where along with other coactivators it can activate transcription of the type I IFN and ISG genes. Can also play a role in regulating adaptive immune responses by inducing PSMB9/LMP2 expression, either directly or through induction of IRF1. Binds to the Q promoter (Qp) of EBV nuclear antigen 1 a (EBNA1) and may play a role in the regulation of EBV latency. Can activate distinct gene expression programs in macrophages and regulate the anti-tumor properties of primary macrophages. This is Interferon regulatory factor 7 (IRF7) from Homo sapiens (Human).